The primary structure comprises 256 residues: ATP synthase peripheral stalk subunit b, mitochondrial (256 aa).

The N-terminal 42 residues, 1–42 (MLSRVVLSAAATAAPCLKNAAALGPGVLQATRAFHTGQPRLA), are a transit peptide targeting the mitochondrion. N6-succinyllysine is present on Lys131. Residues Lys139, Lys154, Lys162, Lys221, Lys225, Lys233, and Lys244 each carry the N6-acetyllysine modification.

This sequence belongs to the eukaryotic ATPase B chain family. Component of the ATP synthase complex composed at least of ATP5F1A/subunit alpha, ATP5F1B/subunit beta, ATP5MC1/subunit c (homooctomer), MT-ATP6/subunit a, MT-ATP8/subunit 8, ATP5ME/subunit e, ATP5MF/subunit f, ATP5MG/subunit g, ATP5MK/subunit k, ATP5MJ/subunit j, ATP5F1C/subunit gamma, ATP5F1D/subunit delta, ATP5F1E/subunit epsilon, ATP5PF/subunit F6, ATP5PB/subunit b, ATP5PD/subunit d, ATP5PO/subunit OSCP. ATP synthase complex consists of a soluble F(1) head domain (subunits alpha(3) and beta(3)) - the catalytic core - and a membrane F(0) domain - the membrane proton channel (subunits c, a, 8, e, f, g, k and j). These two domains are linked by a central stalk (subunits gamma, delta, and epsilon) rotating inside the F1 region and a stationary peripheral stalk (subunits F6, b, d, and OSCP).

The protein localises to the mitochondrion. It is found in the mitochondrion inner membrane. Subunit b, of the mitochondrial membrane ATP synthase complex (F(1)F(0) ATP synthase or Complex V) that produces ATP from ADP in the presence of a proton gradient across the membrane which is generated by electron transport complexes of the respiratory chain. ATP synthase complex consist of a soluble F(1) head domain - the catalytic core - and a membrane F(1) domain - the membrane proton channel. These two domains are linked by a central stalk rotating inside the F(1) region and a stationary peripheral stalk. During catalysis, ATP synthesis in the catalytic domain of F(1) is coupled via a rotary mechanism of the central stalk subunits to proton translocation. In vivo, can only synthesize ATP although its ATP hydrolase activity can be activated artificially in vitro. Part of the complex F(0) domain. Part of the complex F(0) domain and the peripheric stalk, which acts as a stator to hold the catalytic alpha(3)beta(3) subcomplex and subunit a/ATP6 static relative to the rotary elements. This is ATP synthase peripheral stalk subunit b, mitochondrial from Mus musculus (Mouse).